The chain runs to 67 residues: Small ribosomal subunit protein bS21 (67 aa).

This sequence belongs to the bacterial ribosomal protein bS21 family.

This is Small ribosomal subunit protein bS21 from Nitratidesulfovibrio vulgaris (strain DP4) (Desulfovibrio vulgaris).